An 84-amino-acid polypeptide reads, in one-letter code: Small ribosomal subunit protein bS20 (84 aa).

This sequence belongs to the bacterial ribosomal protein bS20 family.

Binds directly to 16S ribosomal RNA. The chain is Small ribosomal subunit protein bS20 from Bacteroides fragilis (strain ATCC 25285 / DSM 2151 / CCUG 4856 / JCM 11019 / LMG 10263 / NCTC 9343 / Onslow / VPI 2553 / EN-2).